A 304-amino-acid chain; its full sequence is Non-specific ribonucleoside hydrolase RihC (304 aa).

His233 is a catalytic residue.

Belongs to the IUNH family. RihC subfamily.

Hydrolyzes both purine and pyrimidine ribonucleosides with a broad-substrate specificity. This Escherichia coli O45:K1 (strain S88 / ExPEC) protein is Non-specific ribonucleoside hydrolase RihC.